The sequence spans 400 residues: Multiphosphoryl transfer protein (400 aa).

The PTS EIIA type-2 domain occupies 2 to 142; it reads LELTTQDIQL…QQIIAIIKGE (141 aa). H62 serves as the catalytic Tele-phosphohistidine intermediate; for EIIA activity. A Phosphohistidine; by HPr modification is found at H62. One can recognise an HPr domain in the interval 310 to 400; it reads AHTATFRIKN…VAINAGLGEG (91 aa). H324 acts as the Pros-phosphohistidine intermediate; for HPr activity in catalysis. H324 is subject to Phosphohistidine; by EI.

The protein resides in the cytoplasm. In terms of biological role, the phosphoenolpyruvate-dependent sugar phosphotransferase system (sugar PTS), a major carbohydrate active transport system, catalyzes the phosphorylation of incoming sugar substrates concomitantly with their translocation across the cell membrane. The enzyme II FruAB PTS system is involved in fructose transport. In Vibrio cholerae serotype O1 (strain ATCC 39315 / El Tor Inaba N16961), this protein is Multiphosphoryl transfer protein.